Here is a 46-residue protein sequence, read N- to C-terminus: Large ribosomal subunit protein bL34 (46 aa).

The protein belongs to the bacterial ribosomal protein bL34 family.

The chain is Large ribosomal subunit protein bL34 (rpmH) from Mycobacterium avium.